Consider the following 140-residue polypeptide: 3-hydroxyacyl-[acyl-carrier-protein] dehydratase FabZ (140 aa).

Histidine 46 is a catalytic residue.

This sequence belongs to the thioester dehydratase family. FabZ subfamily.

The protein localises to the cytoplasm. It catalyses the reaction a (3R)-hydroxyacyl-[ACP] = a (2E)-enoyl-[ACP] + H2O. Its function is as follows. Involved in unsaturated fatty acids biosynthesis. Catalyzes the dehydration of short chain beta-hydroxyacyl-ACPs and long chain saturated and unsaturated beta-hydroxyacyl-ACPs. The polypeptide is 3-hydroxyacyl-[acyl-carrier-protein] dehydratase FabZ (Pseudothermotoga lettingae (strain ATCC BAA-301 / DSM 14385 / NBRC 107922 / TMO) (Thermotoga lettingae)).